Reading from the N-terminus, the 68-residue chain is Large ribosomal subunit protein uL29 (68 aa).

This sequence belongs to the universal ribosomal protein uL29 family.

This is Large ribosomal subunit protein uL29 from Streptococcus gordonii (strain Challis / ATCC 35105 / BCRC 15272 / CH1 / DL1 / V288).